The sequence spans 62 residues: Potassium channel toxin alpha-KTx Tx790 (62 aa).

The first 18 residues, 1–18 (MQKLFIVLVLFCILRLDA), serve as a signal peptide directing secretion. Disulfide bonds link Cys28–Cys46, Cys33–Cys59, and Cys37–Cys61.

It belongs to the short scorpion toxin superfamily. Potassium channel inhibitor family. Alpha-KTx 23 subfamily. In terms of tissue distribution, expressed by the venom gland.

It localises to the secreted. Functionally, may block potassium channels. This is Potassium channel toxin alpha-KTx Tx790 from Buthus israelis (Israeli scorpion).